Consider the following 146-residue polypeptide: MKLHELRPAEGSKKAPKRVGRGNGSGLGKTAGKGHKGQNARSGGGVRPGFEGGQMPLYRRLPKRGFTNIFAKEYVEVNVSRLNIFEDGTEVTPEVLKANGVISKVKDGVKILGNGTLEKKLTIKATKFTKGAVEKIESIGGKAEVI.

The segment covering 1 to 13 (MKLHELRPAEGSK) has biased composition (basic and acidic residues). Residues 1–54 (MKLHELRPAEGSKKAPKRVGRGNGSGLGKTAGKGHKGQNARSGGGVRPGFEGGQ) are disordered. Composition is skewed to gly residues over residues 21 to 31 (RGNGSGLGKTA) and 42 to 52 (SGGGVRPGFEG).

It belongs to the universal ribosomal protein uL15 family. As to quaternary structure, part of the 50S ribosomal subunit.

Binds to the 23S rRNA. This chain is Large ribosomal subunit protein uL15, found in Clostridium novyi (strain NT).